A 459-amino-acid chain; its full sequence is Putative peroxisome assembly protein 12 (459 aa).

The Peroxisomal matrix segment spans residues 1–16; that stretch reads MFMFNFDNGHDPNRPS. A helical membrane pass occupies residues 17 to 44; that stretch reads FFEMLNQHQMMPSFKPALKYIFTVLSQR. Topologically, residues 45 to 47 are cytoplasmic; the sequence is NPK. Residues 48-72 traverse the membrane as a helical segment; the sequence is FRYIVNYYDECFYSLLLLLEYHYLK. The Peroxisomal matrix segment spans residues 73–158; it reads YYEGSFSENF…AKDDLNTMIQ (86 aa). Residues 159-196 form a helical membrane-spanning segment; the sequence is DSDRKESLIYLVLIPYFKGKLDEYYKKESDPLAELGLV. The Cytoplasmic portion of the chain corresponds to 197–248; it reads SSDNNNNNNDNINDQIQQLEEQIQQQQTIVNGNNNSNNNNKKLKIKFLILIR. The chain crosses the membrane as a helical span at residues 249–287; that stretch reads FLKGSKTLKKLKTIFLKVYPFISAIYEALFFIYQLLYLY. The Peroxisomal matrix portion of the chain corresponds to 288–355; the sequence is EYTNYYTPFF…LDSILDYSKY (68 aa). The chain crosses the membrane as a helical span at residues 356–380; sequence ILPLSVFIFKSLEWWYSENRISAPT. The Cytoplasmic portion of the chain corresponds to 381 to 459; sequence LPIPTPPTPS…EQLRKIYETV (79 aa). Zn(2+)-binding residues include Cys406, Cys409, Cys426, and Cys429. Residues 406–444 form an RING-type; degenerate zinc finger; that stretch reads CPLCLKERTNPTICGSGFVFCYPCIFGYVNEHSKCPITF.

It belongs to the pex2/pex10/pex12 family. Component of the PEX2-PEX10-PEX12 retrotranslocation channel.

Its subcellular location is the peroxisome membrane. Its pathway is protein modification; protein ubiquitination. Its function is as follows. Component of a retrotranslocation channel required for peroxisome organization by mediating export of the PEX5 receptor from peroxisomes to the cytosol, thereby promoting PEX5 recycling. The retrotranslocation channel is composed of PEX2, PEX10 and PEX12; each subunit contributing transmembrane segments that coassemble into an open channel that specifically allows the passage of PEX5 through the peroxisomal membrane. PEX12 also regulates PEX5 recycling by activating the E3 ubiquitin-protein ligase activity of PEX10. When PEX5 recycling is compromised, PEX12 stimulates PEX10-mediated polyubiquitination of PEX5, leading to its subsequent degradation. This is Putative peroxisome assembly protein 12 (pex12) from Dictyostelium discoideum (Social amoeba).